The sequence spans 809 residues: MSVAIKFTVKINDGSLRRQQTRHVFLSPAALNRLKLSPSQVIYLKHKGGEAVGITQSVKGNGIGPFEILISPLLAKWANLKAFQRVNISQYVHPLKEAEGIKIVASLSSNNEPIPESLIRKELLEIRYLHPGMIVMGESPMNMAKSGSKNLSSENMATEIFEINSGLSAQSGTEVGSSQSSPSVNESEPKATEDLDELSPGSYKVKEIHIRSPSNLIEAISDMSLDEPRIYKFTAASSMEIETPDLLKLPHEDRTQSAYNQGSEETQNFDGPPSAVTFSSIGGLQAQIAQIRDIVELPFQNPELFKFFNIMPPRGVLLYGPPGTGKTMVMRAVAAEANAQVFTIDGPSVVGKYLGETESRLRKIFEDARAHQPSIIFIDEIDALAPKRTEDVSEAESRAVATLLTLLDGMANAGKVVVIAATNRPNSIDEALRRPGRLEKEIEIGIPDKSARLDIIKLLLSGVPNEINDAQLEDLASRTHAYVGADLAAVVREAALRAIKRTISLQKDTSGLDIFGAVQMDDLEFALSSVRQSAMREFMMESPNVHWSDIGGQEEVKQKLKESVEWPLTHGETFSRLGVRPPKGVLLYGPPGCSKTITAKAIATETGLNFIAVKGPELFDKFVGESERAVRQVFQKARQASPSVIFFDEIDALTANRGEDNSSDRVVAALLNELDGIEALRNVLVLAATNRPDMIDPALMRPGRLDRLLYVGPPNFEARKQIVKIQAEKMKFAEDVDLDLIAEKTEGCSGAEVVALCQEAGLIAMHEDLEAKEICQAHFKTALLALRKAITRDMLEYYASFSESVTSIS.

The disordered stretch occupies residues 169-199; the sequence is AQSGTEVGSSQSSPSVNESEPKATEDLDELS. Over residues 170 to 186 the composition is skewed to low complexity; sequence QSGTEVGSSQSSPSVNE. Residues 320 to 327 and 589 to 596 contribute to the ATP site; these read GPPGTGKT and GPPGCSKT.

This sequence belongs to the AAA ATPase family. AFG2 subfamily. As to quaternary structure, homohexamer; ATP binding induces oligomerization. Forms a ring-shaped particle of about 12 nm diameter, that displays 6-fold radial symmetry. Associates with cytoplasmic pre-60S ribosomal particles.

It localises to the cytoplasm. It catalyses the reaction ATP + H2O = ADP + phosphate + H(+). ATP-dependent chaperone which uses the energy provided by ATP hydrolysis to generate mechanical force to disassemble protein complexes. Plays an essential role in the cytoplasmic maturation steps of pre-60S ribosomal particles by promoting the release of shuttling protein rlp24 from the pre-ribosomal particles. This step facilitates the subsequent release of other shuttling proteins such as nog1 and allows the transition of the pre-ribosomal particles to later maturation forms that bind SPCC550.15c/REI1. This chain is ATPase family gene 2 protein (afg2), found in Schizosaccharomyces pombe (strain 972 / ATCC 24843) (Fission yeast).